We begin with the raw amino-acid sequence, 204 residues long: Small ribosomal subunit protein uS4 (204 aa).

In terms of domain architecture, S4 RNA-binding spans 92 to 153 (RRLDALVLRS…RSKEKTLFTI (62 aa)).

The protein belongs to the universal ribosomal protein uS4 family. As to quaternary structure, part of the 30S ribosomal subunit. Contacts protein S5. The interaction surface between S4 and S5 is involved in control of translational fidelity.

Functionally, one of the primary rRNA binding proteins, it binds directly to 16S rRNA where it nucleates assembly of the body of the 30S subunit. Its function is as follows. With S5 and S12 plays an important role in translational accuracy. In Streptomyces coelicolor (strain ATCC BAA-471 / A3(2) / M145), this protein is Small ribosomal subunit protein uS4.